Here is a 535-residue protein sequence, read N- to C-terminus: tRNA-2-methylthio-N(6)-dimethylallyladenosine synthase (535 aa).

The MTTase N-terminal domain maps to arginine 24–histidine 139. Cysteine 33, cysteine 68, cysteine 102, cysteine 176, cysteine 180, and cysteine 183 together coordinate [4Fe-4S] cluster. One can recognise a Radical SAM core domain in the interval arginine 162–glutamate 392. One can recognise a TRAM domain in the interval glutamate 395–glycine 465. Residues arginine 512–arginine 535 form a disordered region.

Belongs to the methylthiotransferase family. MiaB subfamily. As to quaternary structure, monomer. It depends on [4Fe-4S] cluster as a cofactor.

It localises to the cytoplasm. It catalyses the reaction N(6)-dimethylallyladenosine(37) in tRNA + (sulfur carrier)-SH + AH2 + 2 S-adenosyl-L-methionine = 2-methylsulfanyl-N(6)-dimethylallyladenosine(37) in tRNA + (sulfur carrier)-H + 5'-deoxyadenosine + L-methionine + A + S-adenosyl-L-homocysteine + 2 H(+). Functionally, catalyzes the methylthiolation of N6-(dimethylallyl)adenosine (i(6)A), leading to the formation of 2-methylthio-N6-(dimethylallyl)adenosine (ms(2)i(6)A) at position 37 in tRNAs that read codons beginning with uridine. The chain is tRNA-2-methylthio-N(6)-dimethylallyladenosine synthase from Leifsonia xyli subsp. xyli (strain CTCB07).